The following is a 659-amino-acid chain: Interferon-induced GTP-binding protein Mx2 (659 aa).

The Dynamin-type G domain occupies 65–338 (DLALPAIAVI…LISHICKSLP (274 aa)). Residues 75 to 82 (GDQSSGKS) are G1 motif. Residue 75–82 (GDQSSGKS) coordinates GTP. Positions 100-102 (VTR) are G2 motif. The segment at 176–179 (DLPG) is G3 motif. GTP contacts are provided by residues 176–180 (DLPGI) and 245–248 (TKPD). The tract at residues 245 to 248 (TKPD) is G4 motif. The G5 motif stretch occupies residues 277–280 (KCRG). The segment at 547–567 (EAEEEERKHGKSRSSQSKNLQ) is disordered. Positions 571–659 (MDEIFQHLNA…AQRRLAKFPG (89 aa)) constitute a GED domain.

It belongs to the TRAFAC class dynamin-like GTPase superfamily. Dynamin/Fzo/YdjA family.

It is found in the cytoplasm. Its function is as follows. Interferon-induced dynamin-like GTPase with antiviral activity against vesicular stomatitis virus (VSV). In Rattus norvegicus (Rat), this protein is Interferon-induced GTP-binding protein Mx2 (Mx2).